Consider the following 246-residue polypeptide: Major prion protein (246 aa).

Positions 1–15 (MLVLFVATWSDLGLC) are cleaved as a signal peptide. Residues 16 to 223 (KKRPKPGGWN…ESQAYYQRGS (208 aa)) are interaction with GRB2, ERI3 and SYN1. The segment at 18-102 (RPKPGGWNTG…HKPSKPKTSM (85 aa)) is disordered. Tandem repeats lie at residues 44–52 (PQGGGGWGQ), 53–60 (PHGGGWGQ), 61–68 (PHGGGWGQ), 69–76 (PHGGGWGQ), and 77–84 (PHGGGWGQ). Residues 44–84 (PQGGGGWGQPHGGGWGQPHGGGWGQPHGGGWGQPHGGGWGQ) are 5 X 8 AA tandem repeats of P-H-G-G-G-W-G-Q. Residues 45 to 88 (QGGGGWGQPHGGGWGQPHGGGWGQPHGGGWGQPHGGGWGQGGGT) show a composition bias toward gly residues. Residues His54, Gly55, Gly56, His62, Gly63, Gly64, His70, Gly71, Gly72, His78, Gly79, and Gly80 each coordinate Cu(2+). Residues 91-102 (QWHKPSKPKTSM) show a composition bias toward basic residues. Cys172 and Cys207 are oxidised to a cystine. 2 N-linked (GlcNAc...) asparagine glycosylation sites follow: Asn174 and Asn190. Ser223 carries the GPI-anchor amidated serine lipid modification. Residues 224–246 (SMVLFSSPPVILLISFLIFLIVG) constitute a propeptide, removed in mature form.

This sequence belongs to the prion family. As to quaternary structure, monomer and homodimer. Has a tendency to aggregate into amyloid fibrils containing a cross-beta spine, formed by a steric zipper of superposed beta-strands. Soluble oligomers may represent an intermediate stage on the path to fibril formation. Copper binding may promote oligomerization. Interacts with GRB2, APP, ERI3/PRNPIP and SYN1. Mislocalized cytosolically exposed PrP interacts with MGRN1; this interaction alters MGRN1 subcellular location and causes lysosomal enlargement. Interacts with KIAA1191.

It localises to the cell membrane. It is found in the golgi apparatus. Its function is as follows. Its primary physiological function is unclear. Has cytoprotective activity against internal or environmental stresses. May play a role in neuronal development and synaptic plasticity. May be required for neuronal myelin sheath maintenance. May play a role in iron uptake and iron homeostasis. Soluble oligomers are toxic to cultured neuroblastoma cells and induce apoptosis (in vitro). Association with GPC1 (via its heparan sulfate chains) targets PRNP to lipid rafts. Also provides Cu(2+) or Zn(2+) for the ascorbate-mediated GPC1 deaminase degradation of its heparan sulfate side chains. This chain is Major prion protein (PRNP), found in Cercopithecus mona (Mona monkey).